The primary structure comprises 131 residues: Maturin (131 aa).

Tyr34 carries the post-translational modification Phosphotyrosine. Positions 107 to 120 (FEEYSADVEEEEPE) are enriched in acidic residues. The segment at 107–131 (FEEYSADVEEEEPEADHPQMGVSQQ) is disordered.

The protein belongs to the MTURN family. Phosphorylation at Tyr-34 is essential for its ability to promote megakaryocyte differentiation.

Its subcellular location is the cytoplasm. In terms of biological role, promotes megakaryocyte differentiation by enhancing ERK and JNK signaling as well as up-regulating RUNX1 and FLI1 expression. Represses NF-kappa-B transcriptional activity by inhibiting phosphorylation of RELA at 'Ser- 536'. May be involved in early neuronal development. This chain is Maturin (MTURN), found in Bos taurus (Bovine).